A 194-amino-acid chain; its full sequence is RxLR effector protein Avh240 (194 aa).

An N-terminal signal peptide occupies residues 1–23 (MRPYFTLLLALAFILACTNLVEA). Residues 38-57 (RHLRTAVASVVDLPDDEDER) carry the RxLR-dEER motif. The interval 58–108 (LLGYNTVQLWRMRRTANKLMNGKLTTQKEAALKKWMASQQDKFLAKWLKSS) is host plasma membrane-binding.

This sequence belongs to the RxLR effector family. In terms of assembly, homodimer. Interacts with host soybean aspartic protease AP1.

The protein resides in the secreted. It is found in the host cell membrane. Effector that suppresses plant defense responses during the early stages of pathogen infection. Suppresses cell death induced by effectors and PAMPs in plant hosts. Avh240 dimerizes and localizes at the plasma membrane to interfere with aspartic protease AP1 secretion, which presents an effective mechanism by which effector proteins suppress plant apoplastic immunity. The sequence is that of RxLR effector protein Avh240 from Phytophthora sojae (Soybean stem and root rot agent).